The sequence spans 143 residues: Large ribosomal subunit protein uL11 (143 aa).

It belongs to the universal ribosomal protein uL11 family. In terms of assembly, part of the ribosomal stalk of the 50S ribosomal subunit. Interacts with L10 and the large rRNA to form the base of the stalk. L10 forms an elongated spine to which L12 dimers bind in a sequential fashion forming a multimeric L10(L12)X complex. In terms of processing, one or more lysine residues are methylated.

Forms part of the ribosomal stalk which helps the ribosome interact with GTP-bound translation factors. The polypeptide is Large ribosomal subunit protein uL11 (Thioalkalivibrio sulfidiphilus (strain HL-EbGR7)).